The following is a 294-amino-acid chain: Probable 2-(5''-triphosphoribosyl)-3'-dephosphocoenzyme-A synthase (294 aa).

The protein belongs to the CitG/MdcB family.

It catalyses the reaction 3'-dephospho-CoA + ATP = 2'-(5''-triphospho-alpha-D-ribosyl)-3'-dephospho-CoA + adenine. The sequence is that of Probable 2-(5''-triphosphoribosyl)-3'-dephosphocoenzyme-A synthase from Streptococcus pyogenes serotype M28 (strain MGAS6180).